Here is a 268-residue protein sequence, read N- to C-terminus: Unknown seed protein 30.1 (268 aa).

The first 22 residues, 1–22, serve as a signal peptide directing secretion; it reads MEFAHLTVLSLFCLAFVGITAT. A BURP domain is found at 68 to 259; it reads LFFEHDLHPR…GNKAAAWVPN (192 aa).

The chain is Unknown seed protein 30.1 from Vicia faba (Broad bean).